A 248-amino-acid polypeptide reads, in one-letter code: PF03932 family protein CutC (248 aa).

The protein belongs to the CutC family. Homodimer.

The protein localises to the cytoplasm. The polypeptide is PF03932 family protein CutC (Escherichia coli (strain SMS-3-5 / SECEC)).